We begin with the raw amino-acid sequence, 103 residues long: A-type ATP synthase subunit F (103 aa).

Belongs to the V-ATPase F subunit family. In terms of assembly, has multiple subunits with at least A(3), B(3), C, D, E, F, H, I and proteolipid K(x).

Its subcellular location is the cell membrane. Component of the A-type ATP synthase that produces ATP from ADP in the presence of a proton gradient across the membrane. The sequence is that of A-type ATP synthase subunit F from Pyrococcus abyssi (strain GE5 / Orsay).